The following is a 106-amino-acid chain: Ribonuclease P protein component 4 (106 aa).

Zn(2+) contacts are provided by cysteine 62, cysteine 65, cysteine 88, and cysteine 91.

It belongs to the eukaryotic/archaeal RNase P protein component 4 family. In terms of assembly, consists of a catalytic RNA component and at least 4-5 protein subunits. The cofactor is Zn(2+).

The protein localises to the cytoplasm. It carries out the reaction Endonucleolytic cleavage of RNA, removing 5'-extranucleotides from tRNA precursor.. Functionally, part of ribonuclease P, a protein complex that generates mature tRNA molecules by cleaving their 5'-ends. The protein is Ribonuclease P protein component 4 of Methanocorpusculum labreanum (strain ATCC 43576 / DSM 4855 / Z).